Consider the following 138-residue polypeptide: Nanos homolog 2 (138 aa).

The segment at 31-55 (ETQEIEEPSPGPPLGQDQGLGAPGA) is disordered. The Nanos-type zinc-finger motif lies at 62-116 (LCNFCKHNGESRHVYSSHQLKTPDGVVVCPILRHYVCPVCGATGDQAHTLKYCPL). Cys-63, Cys-66, His-79, Cys-90, Cys-98, Cys-101, His-109, and Cys-114 together coordinate Zn(2+). 2 consecutive short sequence motifs (C2HC) follow at residues 63–90 (CNFC…VVVC) and 98–114 (CPVC…LKYC).

It belongs to the nanos family. Interacts with CNOT1, CNOT3, CNOT6L, CNOT7 and CNOT9. In terms of tissue distribution, testis and ovary. Expression found in several spermatogenic stages: in cells on the periphery of the tubules which could correspond to spermatogonia, in spermatocytes and in round spermatids (at protein level).

Its subcellular location is the cytoplasm. It is found in the P-body. It localises to the perinuclear region. Plays a key role in the sexual differentiation of germ cells by promoting the male fate but suppressing the female fate. Represses the female fate pathways by suppressing meiosis, which in turn results in the promotion of the male fate. Maintains the suppression of meiosis by preventing STRA8 expression, which is required for premeiotic DNA replication, after CYP26B1 is decreased. Regulates the localization of the CCR4-NOT deadenylation complex to P-bodies and plays a role in recruiting the complex to trigger the degradation of mRNAs involved in meiosis. Required for the maintenance of the spermatogonial stem cell population. Not essential for the assembly of P-bodies but is required for the maintenance of their normal state. This chain is Nanos homolog 2 (NANOS2), found in Homo sapiens (Human).